The sequence spans 720 residues: Polyribonucleotide nucleotidyltransferase (720 aa).

Residues Asp-487 and Asp-493 each coordinate Mg(2+). Positions 554 to 613 (PRIETFKIPTDKIREVIGTGGKVIREIVEKTGAKINIEDDGTVKVASNDGEAMKAAIKWI) constitute a KH domain. The 69-residue stretch at 623–691 (GQIYEGTVVK…DRGKTRLSMK (69 aa)) folds into the S1 motif domain. Residues 691–720 (KAVDQQTGEDLEAAGHKAEKADAPREAAGE) form a disordered region. Basic and acidic residues predominate over residues 703–720 (AAGHKAEKADAPREAAGE).

It belongs to the polyribonucleotide nucleotidyltransferase family. The cofactor is Mg(2+).

The protein resides in the cytoplasm. The catalysed reaction is RNA(n+1) + phosphate = RNA(n) + a ribonucleoside 5'-diphosphate. In terms of biological role, involved in mRNA degradation. Catalyzes the phosphorolysis of single-stranded polyribonucleotides processively in the 3'- to 5'-direction. The chain is Polyribonucleotide nucleotidyltransferase from Nitrobacter hamburgensis (strain DSM 10229 / NCIMB 13809 / X14).